The chain runs to 444 residues: Probable polygalacturonase At1g80170 (444 aa).

Residues 1-28 form the signal peptide; that stretch reads MSYSRGGTLVTLLLLLVVASSLALTANA. 6 PbH1 repeats span residues 208–234, 235–256, 258–278, 288–309, 317–338, and 351–378; these read CRRVTISGLKVIAPATSPNTDGIHISV, SRGIVIDNTTVSTGDDCISIVK, STQISISNIICGPGHGISIGS, VRDITVDTAIISDTANGVRIKT, VSKIIFRNIKMNNVSNPIIIDQ, and TSAISIENISFVHVRGTSASKEAIKISC. The active-site Proton donor is Asp249. His272 is an active-site residue.

Belongs to the glycosyl hydrolase 28 family. Expressed in young, mature and dehiscing anthers. Found in stems, but not in roots or in abscission zone of floral organs.

Its subcellular location is the secreted. The protein resides in the cell wall. It catalyses the reaction (1,4-alpha-D-galacturonosyl)n+m + H2O = (1,4-alpha-D-galacturonosyl)n + (1,4-alpha-D-galacturonosyl)m.. The sequence is that of Probable polygalacturonase At1g80170 from Arabidopsis thaliana (Mouse-ear cress).